We begin with the raw amino-acid sequence, 117 residues long: UPF0295 protein YgzB (117 aa).

A run of 2 helical transmembrane segments spans residues 13–33 (TFAL…IFFK) and 41–61 (LFMI…FWIG).

It belongs to the UPF0295 family.

The protein localises to the cell membrane. This Bacillus subtilis (strain 168) protein is UPF0295 protein YgzB (ygzB).